We begin with the raw amino-acid sequence, 552 residues long: Putative transport protein Spro_0050 (552 aa).

6 helical membrane passes run 4 to 24, 26 to 46, 65 to 85, 96 to 116, 117 to 137, and 158 to 178; these read IALT…MGNW, IYGV…VGHF, FGLI…FFSS, FAIL…KLFA, VPLP…PALG, and MGYA…MWLI. 2 RCK C-terminal domains span residues 192 to 276 and 279 to 361; these read AFAS…VIGE and DVSL…IVGN. Transmembrane regions (helical) follow at residues 371-391, 393-413, 439-459, 464-484, 493-513, and 530-550; these read MLPV…PLFI, GFPA…ALIL, IVLF…DTLI, LAWI…VGVL, YLTL…LAFA, and VYPL…VLFW.

This sequence belongs to the AAE transporter (TC 2.A.81) family. YidE subfamily.

It localises to the cell membrane. The sequence is that of Putative transport protein Spro_0050 from Serratia proteamaculans (strain 568).